The following is a 182-amino-acid chain: Translation initiation factor IF-3 (182 aa).

The segment at 1-22 (MPLGDCNISTPDNKQNRKNQEI) is disordered.

Belongs to the IF-3 family. Monomer.

Its subcellular location is the cytoplasm. Its function is as follows. IF-3 binds to the 30S ribosomal subunit and shifts the equilibrium between 70S ribosomes and their 50S and 30S subunits in favor of the free subunits, thus enhancing the availability of 30S subunits on which protein synthesis initiation begins. In Xanthomonas axonopodis pv. citri (strain 306), this protein is Translation initiation factor IF-3.